The sequence spans 195 residues: Cell division protein SepF (195 aa).

Residues 32–54 (RYSKTNSSETLAPEEEEPIRNRR) are disordered.

This sequence belongs to the SepF family. As to quaternary structure, homodimer. Interacts with FtsZ.

It localises to the cytoplasm. Functionally, cell division protein that is part of the divisome complex and is recruited early to the Z-ring. Probably stimulates Z-ring formation, perhaps through the cross-linking of FtsZ protofilaments. Its function overlaps with FtsA. This chain is Cell division protein SepF, found in Gloeothece citriformis (strain PCC 7424) (Cyanothece sp. (strain PCC 7424)).